A 180-amino-acid chain; its full sequence is Calcium-binding protein E (180 aa).

4 consecutive EF-hand domains span residues 3-38 (KVEA…NSNI), 40-76 (DPLA…KKIK), 85-120 (ALRS…DPDF), and 139-174 (RAKS…HPEF). Residues aspartate 16, aspartate 18, aspartate 20, asparagine 22, and glutamate 27 each contribute to the Ca(2+) site. Positions 98, 100, 102, 109, 152, 154, 156, 158, and 163 each coordinate Ca(2+).

This is Calcium-binding protein E (cbpE) from Dictyostelium discoideum (Social amoeba).